A 127-amino-acid chain; its full sequence is Large ribosomal subunit protein bL20c (127 aa).

It belongs to the bacterial ribosomal protein bL20 family.

Its subcellular location is the plastid. It localises to the chloroplast. Its function is as follows. Binds directly to 23S ribosomal RNA and is necessary for the in vitro assembly process of the 50S ribosomal subunit. It is not involved in the protein synthesizing functions of that subunit. The chain is Large ribosomal subunit protein bL20c from Jasminum nudiflorum (Winter jasmine).